The sequence spans 170 residues: Single-stranded DNA-binding protein (170 aa).

An oligomerization region spans residues 1–26; it reads MSNELKQVEQTEEAVVVSETKDYIKV.

This sequence belongs to the phi29likevirus single-strand-binding protein family. Hexamer.

Functionally, single-stranded DNA-binding protein required for the elongation during viral DNA replication by strand displacement. Displaced viral DNA strands are transiently coated with the ssDNA-binding protein and therefore protected againt nucleases. The latter is then probably removed by the replisome that performs lagging strand synthesis or during the events that lead up to the recombination process. Has helix-destabilizing activity since it removes secondary structure from the ssDNA in replicative intermediates. This Bacillus subtilis (Bacteriophage GA-1) protein is Single-stranded DNA-binding protein.